A 102-amino-acid polypeptide reads, in one-letter code: Small ribosomal subunit protein uS10 (102 aa).

It belongs to the universal ribosomal protein uS10 family. As to quaternary structure, part of the 30S ribosomal subunit.

Its function is as follows. Involved in the binding of tRNA to the ribosomes. This chain is Small ribosomal subunit protein uS10, found in Tropheryma whipplei (strain TW08/27) (Whipple's bacillus).